A 430-amino-acid chain; its full sequence is D-galactonate transporter (430 aa).

Topologically, residues 1-17 are cytoplasmic; sequence MDIPVNAAKPGRRRYLT. Residues 18–39 form a helical membrane-spanning segment; it reads LVMIFITVVICYVDRANLAVAS. Residues Tyr-29 and Arg-32 each coordinate D-galactonate. Topologically, residues 40 to 50 are periplasmic; the sequence is AHIQEEFGITK. The helical transmembrane segment at 51–74 threads the bilayer; it reads AEMGYVFSAFAWLYTLCQIPGGWF. Tyr-64 is a D-galactonate binding site. Topologically, residues 75 to 81 are cytoplasmic; sequence LDRVGSR. Residues 82 to 100 form a helical membrane-spanning segment; the sequence is VTYFIAIFGWSVATLFQGF. Residues 101–103 lie on the Periplasmic side of the membrane; it reads ATG. A helical membrane pass occupies residues 104-125; it reads LMSLIGLRAITGIFEAPAFPTN. Topologically, residues 126–141 are cytoplasmic; the sequence is NRMVTSWFPEHERASA. A helical membrane pass occupies residues 142–164; it reads VGFYTSGQFVGLAFLTPLLIWIQ. Over 165–168 the chain is Periplasmic; that stretch reads EMLS. A helical membrane pass occupies residues 169–190; the sequence is WHWVFIVTGGIGIIWSLIWFKV. The Cytoplasmic segment spans residues 191–241; it reads YQPPRLTKGISKAELDYIRDGGGLVDGDAPVKKEARQPLTAKDWKLVFHRK. The chain crosses the membrane as a helical span at residues 242–267; that stretch reads LIGVYLGQFAVASTLWFFLTWFPNYL. At 268–276 the chain is on the periplasmic side; sequence TQEKGITAL. The chain crosses the membrane as a helical span at residues 277-297; the sequence is KAGFMTTVPFLAAFVGVLLSG. Topologically, residues 298–314 are cytoplasmic; it reads WVADLLVRKGFSLGFAR. Residues 315–333 traverse the membrane as a helical segment; that stretch reads KTPIICGLLISTCIMGANY. At 334-336 the chain is on the periplasmic side; it reads TND. The chain crosses the membrane as a helical span at residues 337 to 354; sequence PMMIMCLMALAFFGNGFA. Over 355 to 373 the chain is Cytoplasmic; sequence SITWSLVSSLAPMRLIGLT. Trp-358 provides a ligand contact to D-galactonate. Residues 374–395 form a helical membrane-spanning segment; the sequence is GGVFNFAGGLGGITVPLVVGYL. At 396–400 the chain is on the periplasmic side; that stretch reads AQGYG. Residues 401–423 traverse the membrane as a helical segment; it reads FAPALVYISAVALIGALSYILLV. Residues 424 to 430 are Cytoplasmic-facing; sequence GDVKRVG.

The protein belongs to the major facilitator superfamily. Phthalate permease family.

The protein localises to the cell inner membrane. The enzyme catalyses D-galactonate(in) + H(+)(in) = D-galactonate(out) + H(+)(out). Its function is as follows. Involved in D-galactonate metabolism. Catalyzes the proton-dependent uptake of galactonate into the cell. The sequence is that of D-galactonate transporter (dgoT) from Escherichia coli O6:H1 (strain CFT073 / ATCC 700928 / UPEC).